The primary structure comprises 309 residues: Anamorsin homolog (309 aa).

The segment at 4 to 169 is N-terminal SAM-like domain; sequence VSPGHSVLLL…SYEVGSSAQL (166 aa). Residues 170–218 form a linker region; it reads TLSFAKKKQVEKPKLDENTAKIWSLSAVDMNDDDIDLLDPDELLDEEDL. Positions 230, 242, 245, and 247 each coordinate [2Fe-2S] cluster. Residues 230-247 form a fe-S binding site A region; that stretch reads CGTGGDTKKRKACKNCTC. [4Fe-4S] cluster is bound by residues Cys270, Cys273, Cys281, and Cys284. 2 short sequence motifs (cx2C motif) span residues 270–273 and 281–284; these read CGNC and CASC. Positions 270 to 284 are fe-S binding site B; the sequence is CGNCYLGDAFRCASC.

This sequence belongs to the anamorsin family. In terms of assembly, monomer. [2Fe-2S] cluster serves as cofactor. Requires [4Fe-4S] cluster as cofactor.

The protein localises to the cytoplasm. Its subcellular location is the mitochondrion intermembrane space. Its function is as follows. Component of the cytosolic iron-sulfur (Fe-S) protein assembly (CIA) machinery. Required for the maturation of extramitochondrial Fe-S proteins. Part of an electron transfer chain functioning in an early step of cytosolic Fe-S biogenesis, facilitating the de novo assembly of a [4Fe-4S] cluster on the cytosolic Fe-S scaffold complex. Electrons are transferred from NADPH via a FAD- and FMN-containing diflavin oxidoreductase. Together with the diflavin oxidoreductase, also required for the assembly of the diferric tyrosyl radical cofactor of ribonucleotide reductase (RNR), probably by providing electrons for reduction during radical cofactor maturation in the catalytic small subunit. The sequence is that of Anamorsin homolog from Branchiostoma floridae (Florida lancelet).